A 295-amino-acid polypeptide reads, in one-letter code: UDP-N-acetylenolpyruvoylglucosamine reductase (295 aa).

The FAD-binding PCMH-type domain maps to 24–188 (KVGGNAEIFF…LKVIFKINKG (165 aa)). The active site involves Arg-168. Ser-217 functions as the Proton donor in the catalytic mechanism. Glu-287 is an active-site residue.

This sequence belongs to the MurB family. The cofactor is FAD.

Its subcellular location is the cytoplasm. It catalyses the reaction UDP-N-acetyl-alpha-D-muramate + NADP(+) = UDP-N-acetyl-3-O-(1-carboxyvinyl)-alpha-D-glucosamine + NADPH + H(+). The protein operates within cell wall biogenesis; peptidoglycan biosynthesis. Its function is as follows. Cell wall formation. The polypeptide is UDP-N-acetylenolpyruvoylglucosamine reductase (Rickettsia rickettsii (strain Iowa)).